We begin with the raw amino-acid sequence, 80 residues long: Acyl carrier protein (80 aa).

Residues 4-79 (DEIFSKVRSI…DVVNFIKKRK (76 aa)) enclose the Carrier domain. Position 39 is an O-(pantetheine 4'-phosphoryl)serine (Ser-39).

The protein belongs to the acyl carrier protein (ACP) family. 4'-phosphopantetheine is transferred from CoA to a specific serine of apo-ACP by AcpS. This modification is essential for activity because fatty acids are bound in thioester linkage to the sulfhydryl of the prosthetic group.

It localises to the cytoplasm. The protein operates within lipid metabolism; fatty acid biosynthesis. Functionally, carrier of the growing fatty acid chain in fatty acid biosynthesis. The protein is Acyl carrier protein of Borrelia garinii subsp. bavariensis (strain ATCC BAA-2496 / DSM 23469 / PBi) (Borreliella bavariensis).